A 1430-amino-acid polypeptide reads, in one-letter code: Nephrocystin-4 (1430 aa).

The segment at 824–1430 (MRMGNVGRPP…ETFCVKVRYE (607 aa)) is sufficient for basal bodies localization. Residues 828–857 (NVGRPPEKKLKRRETLPPSNSRIITMHDGR) are disordered.

This sequence belongs to the NPHP4 family.

It localises to the cytoplasm. The protein resides in the cytoskeleton. Its subcellular location is the cilium basal body. Its function is as follows. Involved in the organization of apical junctions. Required for building functional cilia. Involved in the organization of the subapical actin network in multiciliated epithelial cells. Seems to recruit int to basal bodies of motile cilia which subsequently interacts with actin-modifying proteins such as daam1. May down-regulate the canonical Wnt pathway and promote the Wnt-PCP pathway. Acts as a negative regulator of the hippo pathway. This chain is Nephrocystin-4 (nphp4), found in Xenopus laevis (African clawed frog).